We begin with the raw amino-acid sequence, 715 residues long: Fatty acid oxidation complex subunit alpha (715 aa).

An enoyl-CoA hydratase/isomerase region spans residues 1–190; sequence MIYEGKAITV…KVGAVDAVVA (190 aa). A substrate-binding site is contributed by Asp-297. The 3-hydroxyacyl-CoA dehydrogenase stretch occupies residues 312–715; sequence HDVKQAAVLG…MAKNGQRFFN (404 aa). NAD(+) contacts are provided by residues Met-325, Asp-344, 401–403, Lys-408, and Ser-430; that span reads VVE. The active-site For 3-hydroxyacyl-CoA dehydrogenase activity is His-451. Asn-454 is a binding site for NAD(+). The substrate site is built by Asn-501 and Tyr-660.

In the N-terminal section; belongs to the enoyl-CoA hydratase/isomerase family. The protein in the C-terminal section; belongs to the 3-hydroxyacyl-CoA dehydrogenase family. Heterotetramer of two alpha chains (FadB) and two beta chains (FadA).

The catalysed reaction is a (3S)-3-hydroxyacyl-CoA + NAD(+) = a 3-oxoacyl-CoA + NADH + H(+). It carries out the reaction a (3S)-3-hydroxyacyl-CoA = a (2E)-enoyl-CoA + H2O. The enzyme catalyses a 4-saturated-(3S)-3-hydroxyacyl-CoA = a (3E)-enoyl-CoA + H2O. It catalyses the reaction (3S)-3-hydroxybutanoyl-CoA = (3R)-3-hydroxybutanoyl-CoA. The catalysed reaction is a (3Z)-enoyl-CoA = a 4-saturated (2E)-enoyl-CoA. It carries out the reaction a (3E)-enoyl-CoA = a 4-saturated (2E)-enoyl-CoA. Its pathway is lipid metabolism; fatty acid beta-oxidation. Involved in the aerobic and anaerobic degradation of long-chain fatty acids via beta-oxidation cycle. Catalyzes the formation of 3-oxoacyl-CoA from enoyl-CoA via L-3-hydroxyacyl-CoA. It can also use D-3-hydroxyacyl-CoA and cis-3-enoyl-CoA as substrate. The polypeptide is Fatty acid oxidation complex subunit alpha (Pseudomonas putida (strain ATCC 47054 / DSM 6125 / CFBP 8728 / NCIMB 11950 / KT2440)).